A 44-amino-acid chain; its full sequence is Mu-conotoxin-like Cal 12.1.3b (44 aa).

Disulfide bonds link C3–C16, C11–C28, C18–C33, and C27–C38. P23 is modified (4-hydroxyproline). Residues W36 and W37 each carry the 6'-bromotryptophan modification. The residue at position 39 (P39) is a 4-hydroxyproline. W43 carries the post-translational modification 6'-bromotryptophan.

Expressed by the venom duct.

It localises to the secreted. Mu-conotoxins block voltage-gated sodium channels. This toxin reversibly blocks voltage-gated sodium channel in cephalopods, with no alteration in the voltage dependence of sodium conductance or on the kinetics of inactivation. This is Mu-conotoxin-like Cal 12.1.3b from Californiconus californicus (California cone).